We begin with the raw amino-acid sequence, 396 residues long: NADH-ubiquinone oxidoreductase 49 kDa subunit (396 aa).

The protein belongs to the complex I 49 kDa subunit family.

The protein resides in the mitochondrion. The enzyme catalyses a ubiquinone + NADH + 5 H(+)(in) = a ubiquinol + NAD(+) + 4 H(+)(out). Its function is as follows. Core subunit of the mitochondrial membrane respiratory chain NADH dehydrogenase (Complex I) that is believed to belong to the minimal assembly required for catalysis. Complex I functions in the transfer of electrons from NADH to the respiratory chain. The immediate electron acceptor for the enzyme is believed to be ubiquinone. Component of the iron-sulfur (IP) fragment of the enzyme. Component of the iron-sulfur (IP) fragment of the enzyme. This is NADH-ubiquinone oxidoreductase 49 kDa subunit (NAD7) from Reclinomonas americana.